The following is a 536-amino-acid chain: MRALLIYPLFPPTFWSYEKILELVGRKVLLPPLGLITVAGILPQEWEFKLVDRNVRNVTEAEWDWAEVVIISGMIVQRDDMVENIKEAKAHGKLVAVGGPFATSVPDEVQNAGADFLILDEGEITLPLFVEALERGETAGIIRAQEKPDVTTTPIPRYDLLELDAYDSMSVQFSRGCPFQCEFCDIIVLYGRKPRTKEPAQLLRELDYLYELGWRRSVFMVDDNFIGNKRNVKLLLKELKVWQEEHQYPFRFNTEASVDLADDQELMDLMVECYFDAVFLGIETPDEESLEFTKKFQNTRNSLADSVDKIIKAGLRPMAGFIIGFDGEKQGAGDRIVRFAEQTAIPTTTFAMLQALPNTALWHRLKRENRLLDESKGNINQTTLMNFIPTRPLEDIANEYVEAFWELYDPHGYLDRNYRCFLKLGAPKCKTAFKLPNLVDLKALAIVIWRQGVKRDTRFRFWHHAFGILRHNPAVFEHYITLCAHNEHFLQYREIVRQEIGEQLRDYLSRQQQDKVEETVLSPTAIAAETEKVLAS.

One can recognise a Radical SAM core domain in the interval 163-394 (LDAYDSMSVQ…MNFIPTRPLE (232 aa)). [4Fe-4S] cluster-binding residues include cysteine 177, cysteine 181, and cysteine 184.

[4Fe-4S] cluster serves as cofactor.

This is an uncharacterized protein from Synechocystis sp. (strain ATCC 27184 / PCC 6803 / Kazusa).